A 215-amino-acid polypeptide reads, in one-letter code: Reticulon-like protein B14 (215 aa).

One can recognise a Reticulon domain in the interval 31–211 (FADIMFWKNK…NKIPKAQAKT (181 aa)). The next 3 helical transmembrane spans lie at 41-61 (KESGTILGVFTLIWFLFEVVE), 62-82 (YPFITFLCQILLLFIFIFLIW), and 141-161 (LWILSVVGNYFSSLTLLYIVF).

The protein localises to the endoplasmic reticulum membrane. This chain is Reticulon-like protein B14 (RTNLB14), found in Arabidopsis thaliana (Mouse-ear cress).